The primary structure comprises 218 residues: Small ribosomal subunit protein uS3c (218 aa).

The KH type-2 domain occupies 47 to 118 (VQKHMRISSG…RLNITITRIA (72 aa)).

The protein belongs to the universal ribosomal protein uS3 family. As to quaternary structure, part of the 30S ribosomal subunit.

It localises to the plastid. The protein localises to the chloroplast. This is Small ribosomal subunit protein uS3c (rps3) from Amborella trichopoda.